A 195-amino-acid chain; its full sequence is Probable GTP-binding protein EngB (195 aa).

In terms of domain architecture, EngB-type G spans 24–195; the sequence is DWPEIALAGR…EAWEAILRYL (172 aa). GTP is bound by residues 32–39, 59–63, 77–80, 144–147, and 176–178; these read GRSNVGKS, GKTQL, DVPG, TKAD, and FSS. Ser-39 and Thr-61 together coordinate Mg(2+).

This sequence belongs to the TRAFAC class TrmE-Era-EngA-EngB-Septin-like GTPase superfamily. EngB GTPase family. The cofactor is Mg(2+).

Necessary for normal cell division and for the maintenance of normal septation. The sequence is that of Probable GTP-binding protein EngB from Lactococcus lactis subsp. lactis (strain IL1403) (Streptococcus lactis).